A 693-amino-acid polypeptide reads, in one-letter code: Glycine--tRNA ligase beta subunit (693 aa).

Belongs to the class-II aminoacyl-tRNA synthetase family. As to quaternary structure, tetramer of two alpha and two beta subunits.

It is found in the cytoplasm. The enzyme catalyses tRNA(Gly) + glycine + ATP = glycyl-tRNA(Gly) + AMP + diphosphate. This Vibrio vulnificus (strain YJ016) protein is Glycine--tRNA ligase beta subunit.